The following is an 871-amino-acid chain: Chaperone protein ClpB 1 (871 aa).

Positions 6-147 (PNQFTEKAWA…REAIQQIRGS (142 aa)) constitute a Clp R domain. Repeat stretches follow at residues 9–73 (FTEK…ISRQ) and 84–147 (LGQS…IRGS). Positions 160–341 (AALEKYGRDL…RRFQQVYVDQ (182 aa)) are NBD1. 207–214 (GEPGVGKT) serves as a coordination point for ATP. Residues 342 to 550 (PSVEDTISIL…IAEIISKWTG (209 aa)) form a linker region. Positions 392–526 (IDLVDEAAAK…AEAKLREIQV (135 aa)) form a coiled coil. An NBD2 region spans residues 560–771 (EAQKLLHLEE…RVDEFIIFHS (212 aa)). An ATP-binding site is contributed by 610 to 617 (GPTGVGKT). The interval 772-871 (LRKDQLRQIV…FRRQVELATV (100 aa)) is C-terminal.

It belongs to the ClpA/ClpB family. Homohexamer. The oligomerization is ATP-dependent.

It localises to the cytoplasm. Functionally, part of a stress-induced multi-chaperone system, it is involved in the recovery of the cell from heat-induced damage, in cooperation with DnaK, DnaJ and GrpE. Acts before DnaK, in the processing of protein aggregates. Protein binding stimulates the ATPase activity; ATP hydrolysis unfolds the denatured protein aggregates, which probably helps expose new hydrophobic binding sites on the surface of ClpB-bound aggregates, contributing to the solubilization and refolding of denatured protein aggregates by DnaK. This Thermosynechococcus vestitus (strain NIES-2133 / IAM M-273 / BP-1) protein is Chaperone protein ClpB 1 (clpB1).